Consider the following 379-residue polypeptide: Protein RecA (379 aa).

The tract at residues 1–24 (MSVDVKSAQSSKSDSLQAEPRPGE) is disordered. A compositionally biased stretch (polar residues) spans 7–16 (SAQSSKSDSL). Residue 84 to 91 (GPESSGKT) coordinates ATP.

The protein belongs to the RecA family.

The protein resides in the cytoplasm. Functionally, can catalyze the hydrolysis of ATP in the presence of single-stranded DNA, the ATP-dependent uptake of single-stranded DNA by duplex DNA, and the ATP-dependent hybridization of homologous single-stranded DNAs. It interacts with LexA causing its activation and leading to its autocatalytic cleavage. The sequence is that of Protein RecA from Prochlorococcus marinus (strain MIT 9303).